Here is a 121-residue protein sequence, read N- to C-terminus: MDLQKVLPQMILLLLFLNLSPLGGHSHPLGSPSQSPEQSTMQKLLELIREKSEEMAQRQLSKDQGPTKELLKRVLRSQDSAFRIQERLRNSKMAHSSSCFGQKIDRIGAVSRLGCDGLRLF.

The N-terminal stretch at Met-1–Ser-26 is a signal peptide. A disulfide bridge connects residues Cys-99 and Cys-115.

The protein belongs to the natriuretic peptide family. In terms of processing, the precursor molecule is proteolytically cleaved by the endoprotease Furin to produce brain natriuretic peptide 45. May undergo further proteolytic cleavage by various proteases such as DPP4, MME and possibly FAP, to give rise to a variety of shorter peptides. May be cleaved at Ser-91 by the prolyl endopeptidase FAP (seprase) activity (in vitro). May be degraded by IDE. During IDE degradation, the resulting products initially increase the activation of NPR1 and can also stimulate NPR2 to produce cGMP before the fragments are completely degraded and inactivated by IDE (in vitro). In terms of tissue distribution, expressed in the atria and ventricles, but at much lower levels than NPPA. Expression levels in the ventricles are slightly higher than in the atria. Very low levels of expression detected in the brain, hypothalamus, lung and aorta. Atria (at protein level). Cardiocytes (at protein level).

Its subcellular location is the secreted. In terms of biological role, cardiac hormone that plays a key role in mediating cardio-renal homeostasis. May also function as a paracrine antifibrotic factor in the heart. Acts by specifically binding and stimulating NPR1 to produce cGMP, which in turn activates effector proteins that drive various biological responses. Likely involved in regulating the extracellular fluid volume and maintaining the fluid-electrolyte balance through natriuresis, diuresis, kaluresis and chloruresis. The polypeptide is Natriuretic peptides B (Nppb) (Rattus norvegicus (Rat)).